The sequence spans 394 residues: NAD(P)H-quinone oxidoreductase subunit H (394 aa).

The protein belongs to the complex I 49 kDa subunit family. As to quaternary structure, NDH-1 can be composed of about 15 different subunits; different subcomplexes with different compositions have been identified which probably have different functions. In terms of processing, the initiator methionine has been seen to be kept and removed.

Its subcellular location is the cellular thylakoid membrane. The enzyme catalyses a plastoquinone + NADH + (n+1) H(+)(in) = a plastoquinol + NAD(+) + n H(+)(out). It catalyses the reaction a plastoquinone + NADPH + (n+1) H(+)(in) = a plastoquinol + NADP(+) + n H(+)(out). NDH-1 shuttles electrons from an unknown electron donor, via FMN and iron-sulfur (Fe-S) centers, to quinones in the respiratory and/or the photosynthetic chain. The immediate electron acceptor for the enzyme in this species is believed to be plastoquinone. Couples the redox reaction to proton translocation, and thus conserves the redox energy in a proton gradient. Cyanobacterial NDH-1 also plays a role in inorganic carbon-concentration. This Synechocystis sp. (strain ATCC 27184 / PCC 6803 / Kazusa) protein is NAD(P)H-quinone oxidoreductase subunit H (ndhH).